Reading from the N-terminus, the 182-residue chain is A-type ATP synthase subunit E (182 aa).

Belongs to the V-ATPase E subunit family. As to quaternary structure, has multiple subunits with at least A(3), B(3), C, D, E, F, H, I and proteolipid K(x).

It is found in the cell membrane. Component of the A-type ATP synthase that produces ATP from ADP in the presence of a proton gradient across the membrane. This chain is A-type ATP synthase subunit E, found in Methanothrix thermoacetophila (strain DSM 6194 / JCM 14653 / NBRC 101360 / PT) (Methanosaeta thermophila).